The following is a 194-amino-acid chain: Elongation factor P (194 aa).

The protein belongs to the elongation factor P family.

The protein localises to the cytoplasm. It participates in protein biosynthesis; polypeptide chain elongation. Involved in peptide bond synthesis. Stimulates efficient translation and peptide-bond synthesis on native or reconstituted 70S ribosomes in vitro. Probably functions indirectly by altering the affinity of the ribosome for aminoacyl-tRNA, thus increasing their reactivity as acceptors for peptidyl transferase. In Hydrogenobaculum sp. (strain Y04AAS1), this protein is Elongation factor P.